The following is a 544-amino-acid chain: Ell-associated factor Eaf (544 aa).

The tract at residues 147–544 is disordered; the sequence is QSVPMNMGHQ…LSSNSSDDDD (398 aa). Residues 193–202 show a composition bias toward basic and acidic residues; it reads SSKDKVDFKP. Ser-205 carries the post-translational modification Phosphoserine. Low complexity predominate over residues 264–273; the sequence is SGSSTGSSSG. Positions 287–299 are enriched in basic residues; that stretch reads GKQRQAHGKRQQI. 3 stretches are compositionally biased toward low complexity: residues 305 to 319, 333 to 374, and 396 to 407; these read PPVQQQPHYQQQQQP, QPHP…QQRP, and ASQSVAQAAAVL. Acidic residues predominate over residues 425-440; that stretch reads DSSDSDSGSDSDDSTE. Composition is skewed to low complexity over residues 450-483, 503-513, and 526-544; these read EQQQQQQLQHQQIQQPAPHHQRHQQQQSQQHMNQ, QQPQPQPQQQQ, and NDLLQNDLQLSSNSSDDDD.

The protein belongs to the EAF family.

The protein localises to the nucleus. Promotes transcriptional elongation by Su(Tpl)/ELL. Essential for development. In Drosophila persimilis (Fruit fly), this protein is Ell-associated factor Eaf.